We begin with the raw amino-acid sequence, 1793 residues long: Protein TIC 214 (1793 aa).

6 helical membrane passes run 11–31 (LVSLCLKIINSVIVVGLYYGF), 64–84 (FITGQLVMFISIYYAPLHIAL), 90–112 (ITVITLPYLLLYFLGNNQKNFLN), 129–149 (IFFQNLFFQLLNPFFLPSSIL), 172–192 (VGWLIGHVFFMKWIGLMLVWI), and 222–242 (IFLIFFFITCLYYLGRIPPIY). Residues 1504-1524 (DIEEDYGESDSKKGGKDKNKK) form a disordered region.

It belongs to the TIC214 family. In terms of assembly, part of the Tic complex.

The protein resides in the plastid. It localises to the chloroplast inner membrane. Involved in protein precursor import into chloroplasts. May be part of an intermediate translocation complex acting as a protein-conducting channel at the inner envelope. The chain is Protein TIC 214 from Lotus japonicus (Lotus corniculatus var. japonicus).